Consider the following 661-residue polypeptide: UvrABC system protein B (661 aa).

One can recognise a Helicase ATP-binding domain in the interval 25-182 (KGLNNKKRSQ…NDLVNLQYER (158 aa)). 38–45 (GITGSGKT) is a binding site for ATP. The short motif at 91–114 (YYDYYQPEAYIPKTDVFIEKDSSI) is the Beta-hairpin element. Residues 430 to 592 (QVEDLVGEIQ…IIPKTINRTI (163 aa)) enclose the Helicase C-terminal domain. Residues 621–656 (KAHIDKLRKEMLKAASNLEFEQAAKLRDQLKTLEEA) form the UVR domain.

The protein belongs to the UvrB family. As to quaternary structure, forms a heterotetramer with UvrA during the search for lesions. Interacts with UvrC in an incision complex.

The protein localises to the cytoplasm. Its function is as follows. The UvrABC repair system catalyzes the recognition and processing of DNA lesions. A damage recognition complex composed of 2 UvrA and 2 UvrB subunits scans DNA for abnormalities. Upon binding of the UvrA(2)B(2) complex to a putative damaged site, the DNA wraps around one UvrB monomer. DNA wrap is dependent on ATP binding by UvrB and probably causes local melting of the DNA helix, facilitating insertion of UvrB beta-hairpin between the DNA strands. Then UvrB probes one DNA strand for the presence of a lesion. If a lesion is found the UvrA subunits dissociate and the UvrB-DNA preincision complex is formed. This complex is subsequently bound by UvrC and the second UvrB is released. If no lesion is found, the DNA wraps around the other UvrB subunit that will check the other stand for damage. This chain is UvrABC system protein B, found in Rickettsia bellii (strain OSU 85-389).